Reading from the N-terminus, the 528-residue chain is ADP,ATP carrier protein 1 (528 aa).

Transmembrane regions (helical) follow at residues 24 to 44 (LKKVLPMFLMFFCISFNYTIL), 63 to 83 (IPFIKLWLVVPSAVVFMLIYA), 93 to 113 (ALFFAVLSPFVVFFALFPVVI), 124 to 144 (AFADTLQSILPSGFMGFIAML), 149 to 169 (FAVFYVLSELWGSVMLSLMFW), 184 to 204 (FYALFGVGANVALLISGPAII), 220 to 240 (WGVSLYFLMAMFLCSCAIIAA), 284 to 304 (YMLLLALLVICYGICINLVEV), 327 to 347 (FSFWTGVVSVFVMLFIGGNVI), 356 to 376 (ALVTPIMVLVTGAVFFALVIF), 381 to 401 (TGLVAALGTTPLMLAVVVGAI), and 463 to 483 (IGAMTPFLAVALFAIIMVWLT).

The protein belongs to the ADP/ATP translocase tlc family.

The protein resides in the cell membrane. This is ADP,ATP carrier protein 1 (tlcA) from Chlamydia trachomatis serovar D (strain ATCC VR-885 / DSM 19411 / UW-3/Cx).